Consider the following 290-residue polypeptide: Porphobilinogen deaminase (290 aa).

Residue Cys237 is modified to S-(dipyrrolylmethanemethyl)cysteine.

The protein belongs to the HMBS family. In terms of assembly, monomer. It depends on dipyrromethane as a cofactor.

The enzyme catalyses 4 porphobilinogen + H2O = hydroxymethylbilane + 4 NH4(+). Its pathway is porphyrin-containing compound metabolism; protoporphyrin-IX biosynthesis; coproporphyrinogen-III from 5-aminolevulinate: step 2/4. Functionally, tetrapolymerization of the monopyrrole PBG into the hydroxymethylbilane pre-uroporphyrinogen in several discrete steps. In Clostridium botulinum (strain 657 / Type Ba4), this protein is Porphobilinogen deaminase.